The chain runs to 410 residues: MTIALSEQLTNRFFRYLAVSSQSDAASPTLPSTEGQHKMAQMLAEELRQLGLEDILIDEHATVTARKPGNQPTAPRIGFITHIDTVDVGLSPDIHPQRLRFTGSDLCLNAEQGIYLRTAEHPEILRYQGEEIIFSDGTSVLGADNKAAVTVVMTLLENLTADDCHGDIVVAFVPDEEIGLRGAKALDLARFDVDFAYTIDCCELGEVVYENFNAASAEIDIIGVTAHPMSAKNVLINPIRVAYDIISEFSPQETPEHTEGREGYVWFTDMTANPNSAKLKIAIRDFDNVSFAARKAYIGEVVAKVSAQYPRAKISYSVTDVYSNISNSIGEDKRAIDLIFSSMAELNIEPKVIPMRGGTDGAALSTQGLLTPNYFTGAHNFHSPFEFLPISSFVKSYQLTRTICLSAAKA.

Position 82 (H82) interacts with Zn(2+). D84 is an active-site residue. D144 is a binding site for Zn(2+). E176 (proton acceptor) is an active-site residue. E177, D200, and H382 together coordinate Zn(2+).

This sequence belongs to the peptidase M20B family. Requires Zn(2+) as cofactor.

In Yersinia pestis, this protein is Peptidase T-like protein YPO1009/y3403/YP_3421.